Reading from the N-terminus, the 166-residue chain is MRLILLSGLLLLGIFLANGDEVDREGKVVNSLIDALMHLQREFAKLKGSFLIVHKARSFGSGSERMYVTNKEIKNFEALRQICEQADGHIPSPQLENQNKAFANVLERHGKEAYLVVGDSANFTNWAAGEPNKAAGACVKADTHGSWHSASCDDNLLVVCEFYFIL.

Residues 1-19 (MRLILLSGLLLLGIFLANG) form the signal peptide. A C-type lectin domain is found at 46–161 (LKGSFLIVHK…CDDNLLVVCE (116 aa)). 2 cysteine pairs are disulfide-bonded: Cys83/Cys160 and Cys138/Cys152. A glycan (N-linked (GlcNAc...) asparagine) is linked at Asn122.

It belongs to the alpha-type phospholipase A2 inhibitor family. As to quaternary structure, homotrimer; non-covalently linked. In terms of tissue distribution, expressed by the liver.

Its subcellular location is the secreted. This phospholipase A2 inhibitor binds directly phospholipase A2 in the presence or absence of calcium. This is Phospholipase A2 inhibitor A1 from Bothrops neuwiedi (Neuwied's lancehead).